Here is a 105-residue protein sequence, read N- to C-terminus: Cuticle protein AMP1B (105 aa).

The tract at residues 1–21 is disordered; sequence DRDAQTLTDERSDQGDGNFRY. In terms of domain architecture, Chitin-binding type R&amp;R spans 16–81; it reads DGNFRYEFET…PSSDLLPVPP (66 aa).

In terms of tissue distribution, arthrodial membrane.

This chain is Cuticle protein AMP1B, found in Homarus americanus (American lobster).